A 478-amino-acid polypeptide reads, in one-letter code: Protein nucleotidyltransferase YdiU (478 aa).

The ATP site is built by Gly84, Gly86, Arg87, Lys107, Asp119, Gly120, Arg170, and Arg177. Asp246 serves as the catalytic Proton acceptor. The Mg(2+) site is built by Asn247 and Asp256. An ATP-binding site is contributed by Asp256.

Belongs to the SELO family. Mg(2+) serves as cofactor. Mn(2+) is required as a cofactor.

The catalysed reaction is L-seryl-[protein] + ATP = 3-O-(5'-adenylyl)-L-seryl-[protein] + diphosphate. The enzyme catalyses L-threonyl-[protein] + ATP = 3-O-(5'-adenylyl)-L-threonyl-[protein] + diphosphate. It carries out the reaction L-tyrosyl-[protein] + ATP = O-(5'-adenylyl)-L-tyrosyl-[protein] + diphosphate. It catalyses the reaction L-histidyl-[protein] + UTP = N(tele)-(5'-uridylyl)-L-histidyl-[protein] + diphosphate. The catalysed reaction is L-seryl-[protein] + UTP = O-(5'-uridylyl)-L-seryl-[protein] + diphosphate. The enzyme catalyses L-tyrosyl-[protein] + UTP = O-(5'-uridylyl)-L-tyrosyl-[protein] + diphosphate. Its function is as follows. Nucleotidyltransferase involved in the post-translational modification of proteins. It can catalyze the addition of adenosine monophosphate (AMP) or uridine monophosphate (UMP) to a protein, resulting in modifications known as AMPylation and UMPylation. In Escherichia coli O81 (strain ED1a), this protein is Protein nucleotidyltransferase YdiU.